Here is a 344-residue protein sequence, read N- to C-terminus: Biotin synthase (344 aa).

One can recognise a Radical SAM core domain in the interval 36 to 260; that stretch reads NQIQISTLLS…MMPTSYIRLS (225 aa). The [4Fe-4S] cluster site is built by C51, C55, and C58. The [2Fe-2S] cluster site is built by C95, C126, C186, and R258.

Belongs to the radical SAM superfamily. Biotin synthase family. In terms of assembly, homodimer. [4Fe-4S] cluster serves as cofactor. Requires [2Fe-2S] cluster as cofactor.

The enzyme catalyses (4R,5S)-dethiobiotin + (sulfur carrier)-SH + 2 reduced [2Fe-2S]-[ferredoxin] + 2 S-adenosyl-L-methionine = (sulfur carrier)-H + biotin + 2 5'-deoxyadenosine + 2 L-methionine + 2 oxidized [2Fe-2S]-[ferredoxin]. The protein operates within cofactor biosynthesis; biotin biosynthesis; biotin from 7,8-diaminononanoate: step 2/2. In terms of biological role, catalyzes the conversion of dethiobiotin (DTB) to biotin by the insertion of a sulfur atom into dethiobiotin via a radical-based mechanism. The polypeptide is Biotin synthase (Buchnera aphidicola subsp. Baizongia pistaciae (strain Bp)).